The chain runs to 290 residues: 2-phosphoglycerate kinase (290 aa).

An ATP-cone domain is found at 1 to 89 (MIIVTDSERK…FWRELRRRKV (89 aa)).

Belongs to the 2-phosphoglycerate kinase family. A divalent metal cation is required as a cofactor.

The catalysed reaction is (2R)-2-phosphoglycerate + ATP = (2R)-2,3-bisphosphoglycerate + ADP + H(+). The protein operates within thermoadapter biosynthesis; cyclic 2,3-diphosphoglycerate biosynthesis; cyclic 2,3-diphosphoglycerate from 2-phospho-D-glycerate: step 1/2. Its function is as follows. Catalyzes the phosphorylation of 2-phosphoglycerate to 2,3-diphosphoglycerate. Involved in the biosynthesis of cyclic 2,3-bisphosphoglycerate, a thermoprotectant. In Thermococcus kodakarensis (strain ATCC BAA-918 / JCM 12380 / KOD1) (Pyrococcus kodakaraensis (strain KOD1)), this protein is 2-phosphoglycerate kinase.